The sequence spans 879 residues: Metabotropic glutamate receptor 3 (879 aa).

The N-terminal stretch at 1–22 (MKMLTRLQVLTLALFSKGFLLS) is a signal peptide. The Extracellular portion of the chain corresponds to 23-576 (LGDHNFLRRE…EDYIRWEDAW (554 aa)). Cysteines 57 and 99 form a disulfide. L-glutamate contacts are provided by residues S151 and 172-174 (AST). N-linked (GlcNAc...) asparagine glycosylation is present at N209. Y222 lines the L-glutamate pocket. 7 cysteine pairs are disulfide-bonded: C240-C527, C361-C373, C412-C419, C509-C528, C513-C531, C534-C546, and C549-C562. N-linked (GlcNAc...) asparagine glycosylation occurs at N292. D301 provides a ligand contact to L-glutamate. K389 is a binding site for L-glutamate. N414 and N439 each carry an N-linked (GlcNAc...) asparagine glycan. The chain crosses the membrane as a helical span at residues 577-599 (AIGPVTIACLGFMCTCMVVTVFI). The Cytoplasmic segment spans residues 600–613 (KHNNTPLVKASGRE). The helical transmembrane segment at 614 to 634 (LCYILLFGVGLSYCMTFFFIA) threads the bilayer. The Extracellular portion of the chain corresponds to 635-645 (KPSPVICALRR). A helical membrane pass occupies residues 646–664 (LGLGSSFAICYSALLTKTN). Topologically, residues 665–688 (CIARIFDGVKNGAQRPKFISPSSQ) are cytoplasmic. Residues 689–709 (VFICLGLILVQIVMVSVWLIL) traverse the membrane as a helical segment. Residues 710–734 (EAPGTRRYTLAEKRETVILKCNVKD) lie on the Extracellular side of the membrane. Residues 735 to 756 (SSMLISLTYDVILVILCTVYAF) traverse the membrane as a helical segment. Topologically, residues 757 to 769 (KTRKCPENFNEAK) are cytoplasmic. The chain crosses the membrane as a helical span at residues 770–792 (FIGFTMYTTCIIWLAFLPIFYVT). Over 793 to 802 (SSDYRVQTTT) the chain is Extracellular. The helical transmembrane segment at 803–828 (MCISVSLSGFVVLGCLFAPKVHIILF) threads the bilayer. The Cytoplasmic portion of the chain corresponds to 829–879 (QPQKNVVTHRLHLNRFSVSGTGTTYSQSSASTYVPTVCNGREVLDSTTSSL).

Belongs to the G-protein coupled receptor 3 family. In terms of assembly, interacts with TAMALIN. In terms of tissue distribution, detected in brain cortex, thalamus, subthalamic nucleus, substantia nigra, hypothalamus, hippocampus, corpus callosum, caudate nucleus and amygdala.

The protein localises to the cell membrane. In terms of biological role, G-protein coupled receptor for glutamate. Ligand binding causes a conformation change that triggers signaling via guanine nucleotide-binding proteins (G proteins) and modulates the activity of down-stream effectors. Signaling inhibits adenylate cyclase activity. This Homo sapiens (Human) protein is Metabotropic glutamate receptor 3 (GRM3).